The sequence spans 504 residues: Maturase K (504 aa).

The protein belongs to the intron maturase 2 family. MatK subfamily.

It is found in the plastid. The protein localises to the chloroplast. In terms of biological role, usually encoded in the trnK tRNA gene intron. Probably assists in splicing its own and other chloroplast group II introns. In Hamamelis virginiana (Witch-hazel), this protein is Maturase K.